Consider the following 310-residue polypeptide: Methionyl-tRNA formyltransferase (310 aa).

111–114 provides a ligand contact to (6S)-5,6,7,8-tetrahydrofolate; that stretch reads SLLP.

This sequence belongs to the Fmt family.

It catalyses the reaction L-methionyl-tRNA(fMet) + (6R)-10-formyltetrahydrofolate = N-formyl-L-methionyl-tRNA(fMet) + (6S)-5,6,7,8-tetrahydrofolate + H(+). In terms of biological role, attaches a formyl group to the free amino group of methionyl-tRNA(fMet). The formyl group appears to play a dual role in the initiator identity of N-formylmethionyl-tRNA by promoting its recognition by IF2 and preventing the misappropriation of this tRNA by the elongation apparatus. This is Methionyl-tRNA formyltransferase from Rhodopseudomonas palustris (strain TIE-1).